The sequence spans 239 residues: ATP-dependent dethiobiotin synthetase BioD (239 aa).

15-20 (EIGKTF) lines the ATP pocket. Thr-19 contributes to the Mg(2+) binding site. Lys-40 is an active-site residue. Residues Asp-57, 118–121 (EGVG), and 178–179 (NH) contribute to the ATP site. The Mg(2+) site is built by Asp-57 and Glu-118.

It belongs to the dethiobiotin synthetase family. Homodimer. It depends on Mg(2+) as a cofactor.

Its subcellular location is the cytoplasm. The catalysed reaction is (7R,8S)-7,8-diammoniononanoate + CO2 + ATP = (4R,5S)-dethiobiotin + ADP + phosphate + 3 H(+). It functions in the pathway cofactor biosynthesis; biotin biosynthesis; biotin from 7,8-diaminononanoate: step 1/2. In terms of biological role, catalyzes a mechanistically unusual reaction, the ATP-dependent insertion of CO2 between the N7 and N8 nitrogen atoms of 7,8-diaminopelargonic acid (DAPA, also called 7,8-diammoniononanoate) to form a ureido ring. The sequence is that of ATP-dependent dethiobiotin synthetase BioD from Burkholderia ambifaria (strain ATCC BAA-244 / DSM 16087 / CCUG 44356 / LMG 19182 / AMMD) (Burkholderia cepacia (strain AMMD)).